Reading from the N-terminus, the 219-residue chain is 7-cyano-7-deazaguanine synthase (219 aa).

10–20 contacts ATP; the sequence is FSGGQDSTTCL. Residues cysteine 186, cysteine 195, cysteine 198, and cysteine 201 each coordinate Zn(2+).

Belongs to the QueC family. As to quaternary structure, homodimer. Zn(2+) serves as cofactor.

It catalyses the reaction 7-carboxy-7-deazaguanine + NH4(+) + ATP = 7-cyano-7-deazaguanine + ADP + phosphate + H2O + H(+). Its pathway is purine metabolism; 7-cyano-7-deazaguanine biosynthesis. Functionally, catalyzes the ATP-dependent conversion of 7-carboxy-7-deazaguanine (CDG) to 7-cyano-7-deazaguanine (preQ(0)). The protein is 7-cyano-7-deazaguanine synthase of Bacillus licheniformis (strain ATCC 14580 / DSM 13 / JCM 2505 / CCUG 7422 / NBRC 12200 / NCIMB 9375 / NCTC 10341 / NRRL NRS-1264 / Gibson 46).